The following is a 285-amino-acid chain: MSTNDNWYIEHFQPTGSAIGFRISGKLDEVQSLFQKIEIYQTTDWGKLMLIDGAVMLTSRDNFFYHEMISHPALFTHPTPKRVVIIGGGDCGTLREVLKHPGVESATQCDIDEQVTRMSEKYFPELCDSNHDARAELLFDDGVAYMANCPAGSVDIVIVDSTDPVGPAEGLFNKAFYESCFKALKDDGLLVQQSESPLALLDLIKEMRTEMGKAGFQSFKTLPFPQPCYPTGWWSVTMASKQAKADFAFRQGAAQAKGFETLYYTAHLHTGVLVAPPFVAKALGE.

One can recognise a PABS domain in the interval 5–241 (DNWYIEHFQP…GWWSVTMASK (237 aa)). An S-methyl-5'-thioadenosine-binding site is contributed by glutamine 35. 2 residues coordinate spermidine: histidine 66 and aspartate 90. Residues aspartate 110 and 141-142 (DG) each bind S-methyl-5'-thioadenosine. The Proton acceptor role is filled by aspartate 160. 160 to 163 (DSTD) lines the spermidine pocket. Position 167 (proline 167) interacts with S-methyl-5'-thioadenosine.

The protein belongs to the spermidine/spermine synthase family. Homodimer or homotetramer.

The protein localises to the cytoplasm. The catalysed reaction is S-adenosyl 3-(methylsulfanyl)propylamine + putrescine = S-methyl-5'-thioadenosine + spermidine + H(+). It participates in amine and polyamine biosynthesis; spermidine biosynthesis; spermidine from putrescine: step 1/1. In terms of biological role, catalyzes the irreversible transfer of a propylamine group from the amino donor S-adenosylmethioninamine (decarboxy-AdoMet) to putrescine (1,4-diaminobutane) to yield spermidine. The polypeptide is Polyamine aminopropyltransferase (Xanthomonas oryzae pv. oryzae (strain MAFF 311018)).